Consider the following 291-residue polypeptide: Protease HtpX (291 aa).

A run of 2 helical transmembrane segments spans residues 4 to 24 (VLLF…VLSV) and 37 to 57 (GGLL…SLLM). His143 contacts Zn(2+). The active site involves Glu144. Residue His147 coordinates Zn(2+). 2 helical membrane-spanning segments follow: residues 158–178 (LIQG…AGIV) and 198–218 (FAIS…IVMW). Glu224 provides a ligand contact to Zn(2+).

This sequence belongs to the peptidase M48B family. Zn(2+) is required as a cofactor.

It is found in the cell inner membrane. This is Protease HtpX from Tolumonas auensis (strain DSM 9187 / NBRC 110442 / TA 4).